The following is a 319-amino-acid chain: ATP-dependent 6-phosphofructokinase (319 aa).

Residue Gly11 coordinates ATP. Arg21–Arg25 lines the ADP pocket. ATP is bound by residues Arg72–Cys73 and Gly102–Ser105. Asp103 provides a ligand contact to Mg(2+). Thr125–Asp127 is a substrate binding site. Asp127 functions as the Proton acceptor in the catalytic mechanism. Arg154 provides a ligand contact to ADP. Substrate contacts are provided by residues Arg162 and Met169 to Arg171. ADP is bound by residues Gly185 to Glu187, Arg211, and Lys213 to His215. Substrate contacts are provided by residues Glu222, Arg243, and His249–Arg252.

This sequence belongs to the phosphofructokinase type A (PFKA) family. ATP-dependent PFK group I subfamily. Prokaryotic clade 'B1' sub-subfamily. Homotetramer. Mg(2+) serves as cofactor.

It is found in the cytoplasm. It catalyses the reaction beta-D-fructose 6-phosphate + ATP = beta-D-fructose 1,6-bisphosphate + ADP + H(+). It functions in the pathway carbohydrate degradation; glycolysis; D-glyceraldehyde 3-phosphate and glycerone phosphate from D-glucose: step 3/4. With respect to regulation, allosterically activated by ADP and other diphosphonucleosides, and allosterically inhibited by phosphoenolpyruvate. Catalyzes the phosphorylation of D-fructose 6-phosphate to fructose 1,6-bisphosphate by ATP, the first committing step of glycolysis. In Bacillus velezensis (strain DSM 23117 / BGSC 10A6 / LMG 26770 / FZB42) (Bacillus amyloliquefaciens subsp. plantarum), this protein is ATP-dependent 6-phosphofructokinase.